Consider the following 424-residue polypeptide: Fasciclin-like arabinogalactan protein 1 (424 aa).

The N-terminal stretch at 1-24 (MAKKMSSLIIIFNILLLLTTQTHA) is a signal peptide. FAS1 domains are found at residues 25 to 170 (HNVT…SRVL) and 184 to 323 (EMNL…DKVL). 5 N-linked (GlcNAc...) asparagine glycosylation sites follow: Asn26, Asn128, Asn160, Asn186, and Asn240. Residues 338 to 393 (APAPAPEDGDVADSPKAAKGKAKGKKKKAAPSPDNDPFGDSDSPAEGPDGEADDAT) are disordered. The segment covering 355-366 (AKGKAKGKKKKA) has biased composition (basic residues). The GPI-anchor amidated aspartate moiety is linked to residue Asp396. The propeptide at 397–424 (AGAVRIIGGAKAGLVVSLLCLFASSWLL) is removed in mature form.

It belongs to the fasciclin-like AGP family. In terms of tissue distribution, preferentially expressed in flowers.

It is found in the secreted. Its subcellular location is the extracellular space. The protein resides in the apoplast. The protein localises to the cell membrane. Functionally, may be a cell surface adhesion protein. The sequence is that of Fasciclin-like arabinogalactan protein 1 (FLA1) from Arabidopsis thaliana (Mouse-ear cress).